A 379-amino-acid chain; its full sequence is MDNLANQGVIVLAAGGTGGHLFPAEALAHELRARGWDVHLATDARAQRFVGAFAQDHVHVIRSATIAGRNPVALLKTFWSLWQGNLDSRKLFRRLKPKLVVGFGGYPTLPPLYAASNMGIPTLIHEQNAVMGRANKGLAGRVKAIAGGFLPENSGAYAAKTVITGNPVRPPVLVAAATPYTPAGKDDRFRLLVFGGSQGAQFFSQAIPAAVALLPEHERARLLITQQARKEDEASARQAYEKLGVPADVAPFFNDMPARMADAHFVIARSGASTVSEITVIGRPAMLVPFPHALDHDQAANAAALAAAGGAEVVRQADLSPQRLAEMLQSAMNEPERLEQQAKAAKSVGKPDAARLLADLAEAIASGKTVQEFKEGNRP.

Residues 17 to 19, Asn-128, Arg-169, Ser-197, and Gln-298 each bind UDP-N-acetyl-alpha-D-glucosamine; that span reads TGG.

The protein belongs to the glycosyltransferase 28 family. MurG subfamily.

Its subcellular location is the cell inner membrane. The catalysed reaction is di-trans,octa-cis-undecaprenyl diphospho-N-acetyl-alpha-D-muramoyl-L-alanyl-D-glutamyl-meso-2,6-diaminopimeloyl-D-alanyl-D-alanine + UDP-N-acetyl-alpha-D-glucosamine = di-trans,octa-cis-undecaprenyl diphospho-[N-acetyl-alpha-D-glucosaminyl-(1-&gt;4)]-N-acetyl-alpha-D-muramoyl-L-alanyl-D-glutamyl-meso-2,6-diaminopimeloyl-D-alanyl-D-alanine + UDP + H(+). It functions in the pathway cell wall biogenesis; peptidoglycan biosynthesis. Cell wall formation. Catalyzes the transfer of a GlcNAc subunit on undecaprenyl-pyrophosphoryl-MurNAc-pentapeptide (lipid intermediate I) to form undecaprenyl-pyrophosphoryl-MurNAc-(pentapeptide)GlcNAc (lipid intermediate II). The protein is UDP-N-acetylglucosamine--N-acetylmuramyl-(pentapeptide) pyrophosphoryl-undecaprenol N-acetylglucosamine transferase of Brucella suis (strain ATCC 23445 / NCTC 10510).